Reading from the N-terminus, the 101-residue chain is Large ribosomal subunit protein uL24 (101 aa).

The protein belongs to the universal ribosomal protein uL24 family. Part of the 50S ribosomal subunit.

Its function is as follows. One of two assembly initiator proteins, it binds directly to the 5'-end of the 23S rRNA, where it nucleates assembly of the 50S subunit. Functionally, one of the proteins that surrounds the polypeptide exit tunnel on the outside of the subunit. The polypeptide is Large ribosomal subunit protein uL24 (Streptococcus sanguinis (strain SK36)).